Consider the following 286-residue polypeptide: Pantothenate synthetase (286 aa).

30 to 37 (MGNLHAGH) contacts ATP. His37 (proton donor) is an active-site residue. Gln61 provides a ligand contact to (R)-pantoate. A beta-alanine-binding site is contributed by Gln61. An ATP-binding site is contributed by 149–152 (GEKD). Gln155 is a (R)-pantoate binding site. Residues Val178 and 186–189 (MSSR) contribute to the ATP site.

Belongs to the pantothenate synthetase family. Homodimer.

The protein resides in the cytoplasm. The catalysed reaction is (R)-pantoate + beta-alanine + ATP = (R)-pantothenate + AMP + diphosphate + H(+). It functions in the pathway cofactor biosynthesis; (R)-pantothenate biosynthesis; (R)-pantothenate from (R)-pantoate and beta-alanine: step 1/1. In terms of biological role, catalyzes the condensation of pantoate with beta-alanine in an ATP-dependent reaction via a pantoyl-adenylate intermediate. The protein is Pantothenate synthetase of Thioalkalivibrio sulfidiphilus (strain HL-EbGR7).